The primary structure comprises 301 residues: GTPase Era (301 aa).

In terms of domain architecture, Era-type G spans 4–173 (KAGFVALIGK…LECISKYLSP (170 aa)). A G1 region spans residues 12 to 19 (GKPNAGKS). Residue 12–19 (GKPNAGKS) coordinates GTP. Positions 38-42 (NATRK) are G2. Residues 64–67 (DTPG) are G3. GTP is bound by residues 64-68 (DTPGL) and 122-125 (SKID). The interval 122–125 (SKID) is G4. The interval 152 to 154 (LSA) is G5. The region spanning 204 to 280 (LSDEIPYESD…FLNLQVIAQK (77 aa)) is the KH type-2 domain.

It belongs to the TRAFAC class TrmE-Era-EngA-EngB-Septin-like GTPase superfamily. Era GTPase family. As to quaternary structure, monomer.

Its subcellular location is the cytoplasm. The protein localises to the cell inner membrane. Functionally, an essential GTPase that binds both GDP and GTP, with rapid nucleotide exchange. Plays a role in 16S rRNA processing and 30S ribosomal subunit biogenesis and possibly also in cell cycle regulation and energy metabolism. This Helicobacter pylori (strain G27) protein is GTPase Era.